Consider the following 254-residue polypeptide: Type II restriction enzyme HpaI (254 aa).

The catalysed reaction is Endonucleolytic cleavage of DNA to give specific double-stranded fragments with terminal 5'-phosphates.. A P subtype restriction enzyme that recognizes the double-stranded sequence 5'-GTTAAC-3' and cleaves after T-3. In Haemophilus parainfluenzae, this protein is Type II restriction enzyme HpaI (hpaIR).